The following is a 304-amino-acid chain: Developmental pluripotency-associated protein 4 (304 aa).

The span at 1–11 (MLRGSASSTSM) shows a compositional bias: polar residues. Disordered regions lie at residues 1 to 84 (MLRG…IPPL) and 147 to 176 (KKLK…VGEP). Residues 12-29 (EKAKGKEWTSTEKSREED) are compositionally biased toward basic and acidic residues. Thr-215 is subject to Phosphothreonine. 2 positions are modified to phosphoserine: Ser-221 and Ser-226.

As to quaternary structure, interacts with DPPA2. Interacts with PCGF1.

The protein localises to the nucleus. Functionally, may be involved in the maintenance of active epigenetic status of target genes. May inhibit differentiation of embryonic cells into a primitive ectoderm lineage. In Homo sapiens (Human), this protein is Developmental pluripotency-associated protein 4 (DPPA4).